The following is a 501-amino-acid chain: Cytochrome P450 2S1 (501 aa).

A heme-binding site is contributed by C441.

This sequence belongs to the cytochrome P450 family. Heme serves as cofactor.

Its subcellular location is the endoplasmic reticulum membrane. It is found in the microsome membrane. The enzyme catalyses all-trans-retinoate + reduced [NADPH--hemoprotein reductase] + O2 = all-trans-5,6-epoxyretinoate + oxidized [NADPH--hemoprotein reductase] + H2O + H(+). It carries out the reaction all-trans-retinoate + reduced [NADPH--hemoprotein reductase] + O2 = all-trans-4-hydroxyretinoate + oxidized [NADPH--hemoprotein reductase] + H2O + H(+). The catalysed reaction is (5S)-hydroperoxy-(6E,8Z,11Z,14Z)-eicosatetraenoate = 5-oxo-(6E,8Z,11Z,14Z)-eicosatetraenoate + H2O. It catalyses the reaction (12S)-hydroperoxy-(5Z,8Z,10E,14Z)-eicosatetraenoate = 12-oxo-(5Z,8Z,10E,14Z)-eicosatetraenoate + H2O. The enzyme catalyses (15S)-hydroperoxy-(5Z,8Z,11Z,13E)-eicosatetraenoate = 15-oxo-(5Z,8Z,11Z,13E)-eicosatetraenoate + H2O. It carries out the reaction prostaglandin H2 = thromboxane A2. The catalysed reaction is prostaglandin H2 = (12S)-hydroxy-(5Z,8E,10E)-heptadecatrienoate + malonaldehyde. It catalyses the reaction (13S)-hydroperoxy-(9Z,11E)-octadecadienoate = 13-oxo-(9Z,11E)-octadecadienoate + H2O. The protein operates within lipid metabolism; fatty acid metabolism. In terms of biological role, a cytochrome P450 monooxygenase involved in the metabolism of retinoids and eicosanoids. In epidermis, may contribute to the oxidative metabolism of all-trans-retinoic acid. For this activity, uses molecular oxygen inserting one oxygen atom into a substrate, and reducing the second into a water molecule, with two electrons provided by NADPH via cytochrome P450 reductase (NADPH--hemoprotein reductase). Additionally, displays peroxidase and isomerase activities toward various oxygenated eicosanoids such as prostaglandin H2 (PGH2) and hydroperoxyeicosatetraenoates (HPETEs). Independently of cytochrome P450 reductase, NADPH, and O2, catalyzes the breakdown of PGH2 to hydroxyheptadecatrienoic acid (HHT) and malondialdehyde (MDA), which is known to act as a mediator of DNA damage. This chain is Cytochrome P450 2S1 (Cyp2s1), found in Mus musculus (Mouse).